The primary structure comprises 446 residues: Glucarate dehydratase-related protein (446 aa).

Substrate contacts are provided by His31, Thr104, Tyr149, and Lys204. Lys206 acts as the Proton acceptor in catalysis. The Mg(2+) site is built by Asp234, Glu265, and Asn288. 234–236 (DPN) lines the substrate pocket. Substrate contacts are provided by residues Asn288, 338-340 (HSN), His367, and Arg421. Catalysis depends on His338, which acts as the Proton acceptor.

This sequence belongs to the mandelate racemase/muconate lactonizing enzyme family. GlucD subfamily. It depends on a divalent metal cation as a cofactor.

Its function is as follows. Does not seem to have an in-vivo activity on glucarate or idarate. Its real substrate is unknown. This chain is Glucarate dehydratase-related protein (gudX), found in Escherichia coli (strain K12).